The sequence spans 827 residues: Protein SEY1 (827 aa).

Residues 1 to 26 (MSQSSPSNAETDEDLSTTSSSSSFVP) are disordered. The Cytoplasmic segment spans residues 1 to 719 (MSQSSPSNAE…KRSIVQHVTQ (719 aa)). One can recognise a GB1/RHD3-type G domain in the interval 63 to 291 (GNNYHIISVF…VKKDLFRPNY (229 aa)). 73–80 (GSQSTGKS) contacts GTP. Coiled coils occupy residues 389 to 409 (KSVY…KFRE) and 472 to 492 (VSNL…VELK). Residues 720–740 (IPYYIYLVIMVLGWNEFMAIV) traverse the membrane as a helical segment. The Lumenal portion of the chain corresponds to 741 to 743 (RNP). The chain crosses the membrane as a helical span at residues 744 to 764 (LFFSLVLVFGAGLYILYSMNL). Residues 765–827 (LKPAMVVVQR…VVETIEMQDL (63 aa)) lie on the Cytoplasmic side of the membrane. Residues 803-823 (QKISASNREKVEEEKVVETIE) adopt a coiled-coil conformation.

It belongs to the TRAFAC class dynamin-like GTPase superfamily. GB1/RHD3 GTPase family. RHD3 subfamily.

Its subcellular location is the endoplasmic reticulum membrane. Its function is as follows. Cooperates with the reticulon proteins and tubule-shaping DP1 family proteins to generate and maintain the structure of the tubular endoplasmic reticulum network. Has GTPase activity, which is required for its function in ER organization. This is Protein SEY1 from Scheffersomyces stipitis (strain ATCC 58785 / CBS 6054 / NBRC 10063 / NRRL Y-11545) (Yeast).